Consider the following 367-residue polypeptide: Flagellar P-ring protein (367 aa).

An N-terminal signal peptide occupies residues 1–21 (MYVFKALAGIVLALVATLAHA).

It belongs to the FlgI family. In terms of assembly, the basal body constitutes a major portion of the flagellar organelle and consists of four rings (L,P,S, and M) mounted on a central rod.

It localises to the periplasm. The protein localises to the bacterial flagellum basal body. Assembles around the rod to form the L-ring and probably protects the motor/basal body from shearing forces during rotation. The protein is Flagellar P-ring protein of Salmonella choleraesuis (strain SC-B67).